The primary structure comprises 101 residues: Small ribosomal subunit protein uS14 (101 aa).

It belongs to the universal ribosomal protein uS14 family. Part of the 30S ribosomal subunit. Contacts proteins S3 and S10.

Its function is as follows. Binds 16S rRNA, required for the assembly of 30S particles and may also be responsible for determining the conformation of the 16S rRNA at the A site. The chain is Small ribosomal subunit protein uS14 from Methylobacterium sp. (strain 4-46).